Reading from the N-terminus, the 100-residue chain is Large ribosomal subunit protein uL23 (100 aa).

The protein belongs to the universal ribosomal protein uL23 family. Part of the 50S ribosomal subunit. Contacts protein L29, and trigger factor when it is bound to the ribosome.

Functionally, one of the early assembly proteins it binds 23S rRNA. One of the proteins that surrounds the polypeptide exit tunnel on the outside of the ribosome. Forms the main docking site for trigger factor binding to the ribosome. The chain is Large ribosomal subunit protein uL23 from Vibrio campbellii (strain ATCC BAA-1116).